Here is a 35-residue protein sequence, read N- to C-terminus: U14-ctenitoxin-Pn1a (35 aa).

3 disulfide bridges follow: Cys-3–Cys-17, Cys-10–Cys-22, and Cys-16–Cys-32.

In terms of tissue distribution, expressed by the venom gland.

Its subcellular location is the secreted. Neurotoxin. This is U14-ctenitoxin-Pn1a from Phoneutria nigriventer (Brazilian armed spider).